The chain runs to 340 residues: N-acetyl-gamma-glutamyl-phosphate reductase (340 aa).

Cys-146 is a catalytic residue.

Belongs to the NAGSA dehydrogenase family. Type 1 subfamily.

Its subcellular location is the cytoplasm. The catalysed reaction is N-acetyl-L-glutamate 5-semialdehyde + phosphate + NADP(+) = N-acetyl-L-glutamyl 5-phosphate + NADPH + H(+). The protein operates within amino-acid biosynthesis; L-arginine biosynthesis; N(2)-acetyl-L-ornithine from L-glutamate: step 3/4. Functionally, catalyzes the NADPH-dependent reduction of N-acetyl-5-glutamyl phosphate to yield N-acetyl-L-glutamate 5-semialdehyde. In Streptococcus thermophilus (strain CNRZ 1066), this protein is N-acetyl-gamma-glutamyl-phosphate reductase.